The chain runs to 653 residues: Putative clathrin assembly protein At2g25430 (653 aa).

An ENTH domain is found at 23–159; that stretch reads VASNMAPDLE…ELALFERKSG (137 aa). The segment covering 160–171 has biased composition (low complexity); the sequence is VSVNSGGNSSHH. Positions 160-240 are disordered; it reads VSVNSGGNSS…GGGGGGRDEK (81 aa). Over residues 172 to 186 the composition is skewed to basic and acidic residues; it reads SNNDDRYGRGRDDFR. Over residues 197 to 214 the composition is skewed to gly residues; the sequence is NGGGGGSDFRGDNNGYGG. Serine 221 carries the post-translational modification Phosphoserine. Threonine 244 carries the post-translational modification Phosphothreonine. A compositionally biased stretch (basic and acidic residues) spans 376–389; that stretch reads RAKRGKSPERKEIE. The interval 376–431 is disordered; it reads RAKRGKSPERKEIEAPPPVVEEEEPEPDMNEIKALPPPENYTPPPPPEPEPQPEKP. Residues 395 to 404 are compositionally biased toward acidic residues; that stretch reads VEEEEPEPDM. Positions 410–425 are enriched in pro residues; the sequence is LPPPENYTPPPPPEPE.

Its subcellular location is the membrane. It localises to the clathrin-coated pit. The protein resides in the golgi apparatus. The protein localises to the cytoplasmic vesicle. It is found in the clathrin-coated vesicle. This chain is Putative clathrin assembly protein At2g25430, found in Arabidopsis thaliana (Mouse-ear cress).